We begin with the raw amino-acid sequence, 172 residues long: Large ribosomal subunit protein uL10 (172 aa).

Belongs to the universal ribosomal protein uL10 family. Part of the ribosomal stalk of the 50S ribosomal subunit. The N-terminus interacts with L11 and the large rRNA to form the base of the stalk. The C-terminus forms an elongated spine to which L12 dimers bind in a sequential fashion forming a multimeric L10(L12)X complex.

Functionally, forms part of the ribosomal stalk, playing a central role in the interaction of the ribosome with GTP-bound translation factors. In Brucella abortus biovar 1 (strain 9-941), this protein is Large ribosomal subunit protein uL10 (rplJ).